A 238-amino-acid polypeptide reads, in one-letter code: Probable transcriptional regulatory protein MGAS10750_Spy0264 (238 aa).

The protein belongs to the TACO1 family. YeeN subfamily.

The protein resides in the cytoplasm. This Streptococcus pyogenes serotype M4 (strain MGAS10750) protein is Probable transcriptional regulatory protein MGAS10750_Spy0264.